We begin with the raw amino-acid sequence, 312 residues long: MQSNINICTLSIFIIESMTTRIGRHINISKGFVSAPEYAKNIGCSVFQIFLGAPQQILSKARQKDELIEFGKQLIKHDLIMVVHGSYTINLCHPPGSKKFETSIKSLVKDLNATNLIGDRCLGVIIHMGKNISENKLTVDQAIDNYVTGIKTALSQTPDNTTIVLETGASQGSEVASHIDGLAQIYWCLNDAERERVYFCIDTCHIWATGYDISSPTGVKKFFKEFDKKIGVEKISCIHFNDSKTGLESKVDRHADLCYGEIGSNGLKAIAKFAKEYKIHLIMETPLDAINPETNQEISYNEEYNKVKSWLK.

The Zn(2+) site is built by His-84, His-127, Glu-166, Asp-202, His-205, His-239, Asp-252, His-254, and Glu-284.

The protein belongs to the AP endonuclease 2 family. Zn(2+) serves as cofactor.

The catalysed reaction is Endonucleolytic cleavage to 5'-phosphooligonucleotide end-products.. Endonuclease IV plays a role in DNA repair. It cleaves phosphodiester bonds at apurinic or apyrimidinic sites (AP sites) to produce new 5'-ends that are base-free deoxyribose 5-phosphate residues. The protein is Putative endonuclease 4 of Acanthamoeba polyphaga (Amoeba).